Consider the following 98-residue polypeptide: Large ribosomal subunit protein uL23 (98 aa).

This sequence belongs to the universal ribosomal protein uL23 family. Part of the 50S ribosomal subunit. Contacts protein L29, and trigger factor when it is bound to the ribosome.

Functionally, one of the early assembly proteins it binds 23S rRNA. One of the proteins that surrounds the polypeptide exit tunnel on the outside of the ribosome. Forms the main docking site for trigger factor binding to the ribosome. This is Large ribosomal subunit protein uL23 from Methylorubrum extorquens (strain CM4 / NCIMB 13688) (Methylobacterium extorquens).